Reading from the N-terminus, the 330-residue chain is Uracil-DNA glycosylase, mitochondrial (330 aa).

Residues 1 to 49 (MASSTPKTLMDFFQPAKRLKASPSSSSFPAVSVAGGSRDLGSVANSPPR) constitute a mitochondrion transit peptide. D173 functions as the Proton acceptor in the catalytic mechanism.

This sequence belongs to the uracil-DNA glycosylase (UDG) superfamily. UNG family.

It is found in the mitochondrion. It catalyses the reaction Hydrolyzes single-stranded DNA or mismatched double-stranded DNA and polynucleotides, releasing free uracil.. With respect to regulation, inhidited by the small peptide uracil-DNA-glycosylase inhibitor (Ugi). Excises uracil residues from the DNA which can arise as a result of misincorporation of dUMP residues by DNA polymerase or due to deamination of cytosine. More active on U:G, U:T and U:C mispairs than on U:A pairs. Highly specific for uracil and no activity with 5-substituted uracil or cytosine derivatives. Required for initiation of base excision repair (BER) of uracil. The protein is Uracil-DNA glycosylase, mitochondrial of Arabidopsis thaliana (Mouse-ear cress).